The following is a 381-amino-acid chain: Chaperone protein DnaJ (381 aa).

The region spanning 5–70 (DFYEVLGVSR…QKKAAYDQYG (66 aa)) is the J domain. A CR-type zinc finger spans residues 136 to 214 (GVSKEIEVPT…CHGQGRKQKT (79 aa)). Residues C149, C152, C166, C169, C188, C191, C202, and C205 each contribute to the Zn(2+) site. CXXCXGXG motif repeat units lie at residues 149-156 (CDTCEGTG), 166-173 (CGTCHGHG), 188-195 (CPTCHGKG), and 202-209 (CNVCHGQG).

It belongs to the DnaJ family. Homodimer. It depends on Zn(2+) as a cofactor.

The protein localises to the cytoplasm. Its function is as follows. Participates actively in the response to hyperosmotic and heat shock by preventing the aggregation of stress-denatured proteins and by disaggregating proteins, also in an autonomous, DnaK-independent fashion. Unfolded proteins bind initially to DnaJ; upon interaction with the DnaJ-bound protein, DnaK hydrolyzes its bound ATP, resulting in the formation of a stable complex. GrpE releases ADP from DnaK; ATP binding to DnaK triggers the release of the substrate protein, thus completing the reaction cycle. Several rounds of ATP-dependent interactions between DnaJ, DnaK and GrpE are required for fully efficient folding. Also involved, together with DnaK and GrpE, in the DNA replication of plasmids through activation of initiation proteins. In Vibrio vulnificus (strain CMCP6), this protein is Chaperone protein DnaJ.